The sequence spans 225 residues: MKYIVGDYLYLGSKENEINNNFTWLMRYLYREFVLDYDKMKKIYGHIESDNNYDDIYNDNNFRDILYFEPNLMDDDKYIYKYENNINLDNDIDDIVFYEEIKNLILELQVYLSEKTTKRLRVMGITKLKLVNDFGINKYVGGIRDLDWKLHFWPEYTIVNDNYITLHELIIACFKIKSHKFETYHEYFMKFDEFHVFSCVKKKDGLNTMCKEIIAFVNFNHYSSL.

Belongs to the mimivirus L31/R44 family.

This is an uncharacterized protein from Acanthamoeba polyphaga (Amoeba).